We begin with the raw amino-acid sequence, 330 residues long: DNA-directed RNA polymerase subunit alpha (330 aa).

The segment at 1–229 (MKNLKFIKPF…DHFNVLVELS (229 aa)) is alpha N-terminal domain (alpha-NTD). The tract at residues 245-330 (AHNYVLDLEI…HSVEEDKDKH (86 aa)) is alpha C-terminal domain (alpha-CTD).

Belongs to the RNA polymerase alpha chain family. As to quaternary structure, homodimer. The RNAP catalytic core consists of 2 alpha, 1 beta, 1 beta' and 1 omega subunit. When a sigma factor is associated with the core the holoenzyme is formed, which can initiate transcription.

It carries out the reaction RNA(n) + a ribonucleoside 5'-triphosphate = RNA(n+1) + diphosphate. DNA-dependent RNA polymerase catalyzes the transcription of DNA into RNA using the four ribonucleoside triphosphates as substrates. In Aster yellows witches'-broom phytoplasma (strain AYWB), this protein is DNA-directed RNA polymerase subunit alpha.